A 227-amino-acid chain; its full sequence is Endo-1,4-beta-xylanase 2 (227 aa).

Residues M1–R36 form the signal peptide. N-linked (GlcNAc...) asparagine glycosylation occurs at N29. The region spanning Q37 to Q225 is the GH11 domain. E121 acts as the Nucleophile in catalysis. E212 (proton donor) is an active-site residue.

This sequence belongs to the glycosyl hydrolase 11 (cellulase G) family.

The protein localises to the secreted. It catalyses the reaction Endohydrolysis of (1-&gt;4)-beta-D-xylosidic linkages in xylans.. The protein operates within glycan degradation; xylan degradation. Functionally, endo-1,4-beta-xylanase involved in the hydrolysis of xylan, a major structural heterogeneous polysaccharide found in plant biomass representing the second most abundant polysaccharide in the biosphere, after cellulose. The sequence is that of Endo-1,4-beta-xylanase 2 (xyn2) from Humicola insolens (Soft-rot fungus).